Reading from the N-terminus, the 318-residue chain is Ribosomal RNA small subunit methyltransferase H (318 aa).

Residues 37 to 39 (GGH), aspartate 57, phenylalanine 83, aspartate 104, and glutamine 111 contribute to the S-adenosyl-L-methionine site.

This sequence belongs to the methyltransferase superfamily. RsmH family.

It localises to the cytoplasm. It catalyses the reaction cytidine(1402) in 16S rRNA + S-adenosyl-L-methionine = N(4)-methylcytidine(1402) in 16S rRNA + S-adenosyl-L-homocysteine + H(+). In terms of biological role, specifically methylates the N4 position of cytidine in position 1402 (C1402) of 16S rRNA. The polypeptide is Ribosomal RNA small subunit methyltransferase H (Neisseria gonorrhoeae (strain NCCP11945)).